The primary structure comprises 113 residues: Large ribosomal subunit protein bL19 (113 aa).

This sequence belongs to the bacterial ribosomal protein bL19 family.

In terms of biological role, this protein is located at the 30S-50S ribosomal subunit interface and may play a role in the structure and function of the aminoacyl-tRNA binding site. The protein is Large ribosomal subunit protein bL19 of Rhodococcus jostii (strain RHA1).